The chain runs to 503 residues: ATP synthase subunit alpha (503 aa).

169-176 contacts ATP; sequence GDRKTGKT.

Belongs to the ATPase alpha/beta chains family. In terms of assembly, F-type ATPases have 2 components, CF(1) - the catalytic core - and CF(0) - the membrane proton channel. CF(1) has five subunits: alpha(3), beta(3), gamma(1), delta(1), epsilon(1). CF(0) has three main subunits: a(1), b(2) and c(9-12). The alpha and beta chains form an alternating ring which encloses part of the gamma chain. CF(1) is attached to CF(0) by a central stalk formed by the gamma and epsilon chains, while a peripheral stalk is formed by the delta and b chains.

The protein localises to the cell membrane. The catalysed reaction is ATP + H2O + 4 H(+)(in) = ADP + phosphate + 5 H(+)(out). Produces ATP from ADP in the presence of a proton gradient across the membrane. The alpha chain is a regulatory subunit. This chain is ATP synthase subunit alpha, found in Lactobacillus delbrueckii subsp. bulgaricus (strain ATCC BAA-365 / Lb-18).